The primary structure comprises 218 residues: Probable nicotinate-nucleotide adenylyltransferase (218 aa).

It belongs to the NadD family.

The enzyme catalyses nicotinate beta-D-ribonucleotide + ATP + H(+) = deamido-NAD(+) + diphosphate. Its pathway is cofactor biosynthesis; NAD(+) biosynthesis; deamido-NAD(+) from nicotinate D-ribonucleotide: step 1/1. Catalyzes the reversible adenylation of nicotinate mononucleotide (NaMN) to nicotinic acid adenine dinucleotide (NaAD). In Burkholderia cenocepacia (strain ATCC BAA-245 / DSM 16553 / LMG 16656 / NCTC 13227 / J2315 / CF5610) (Burkholderia cepacia (strain J2315)), this protein is Probable nicotinate-nucleotide adenylyltransferase.